The primary structure comprises 80 residues: Acyl carrier protein (80 aa).

The Carrier domain maps to 4–79 (EAILEKVRSI…DAVKYIEDKQ (76 aa)). An O-(pantetheine 4'-phosphoryl)serine modification is found at S39.

Belongs to the acyl carrier protein (ACP) family. 4'-phosphopantetheine is transferred from CoA to a specific serine of apo-ACP by AcpS. This modification is essential for activity because fatty acids are bound in thioester linkage to the sulfhydryl of the prosthetic group.

It is found in the cytoplasm. The protein operates within lipid metabolism; fatty acid biosynthesis. In terms of biological role, carrier of the growing fatty acid chain in fatty acid biosynthesis. This Parasynechococcus marenigrum (strain WH8102) protein is Acyl carrier protein.